The sequence spans 905 residues: Translation initiation factor IF-2 (905 aa).

The span at 50–62 (HYEAKGGEDKAAE) shows a compositional bias: basic and acidic residues. The tract at residues 50–306 (HYEAKGGEDK…QKHEVGGVRL (257 aa)) is disordered. Residues 63-75 (KNAPAATPASASK) are compositionally biased toward low complexity. Over residues 89–125 (GPKPSAAPKPGAAPKPGGAPKPGGAPKPGATPKPGGA) the composition is skewed to pro residues. The segment covering 161–171 (PFSTGSSSDRP) has biased composition (low complexity). Positions 233–276 (GSGGGGRGRGGRGGGPGHGGPGHGGFRGRGGRRGGTAGAFGRPG) are enriched in gly residues. Basic residues predominate over residues 280–290 (RRGKKSKRQKR). A compositionally biased stretch (basic and acidic residues) spans 291–302 (HEFEEQQKHEVG). The 175-residue stretch at 401–575 (KRPPVVTVMG…LTADAALELT (175 aa)) folds into the tr-type G domain. Residues 410-417 (GHVDHGKT) form a G1 region. 410-417 (GHVDHGKT) contributes to the GTP binding site. The G2 stretch occupies residues 435-439 (GITQG). A G3 region spans residues 460 to 463 (DTPG). Residues 460–464 (DTPGH) and 514–517 (NKID) contribute to the GTP site. Residues 514–517 (NKID) are G4. The tract at residues 550-552 (SAK) is G5.

The protein belongs to the TRAFAC class translation factor GTPase superfamily. Classic translation factor GTPase family. IF-2 subfamily.

It localises to the cytoplasm. In terms of biological role, one of the essential components for the initiation of protein synthesis. Protects formylmethionyl-tRNA from spontaneous hydrolysis and promotes its binding to the 30S ribosomal subunits. Also involved in the hydrolysis of GTP during the formation of the 70S ribosomal complex. The polypeptide is Translation initiation factor IF-2 (Corynebacterium aurimucosum (strain ATCC 700975 / DSM 44827 / CIP 107346 / CN-1) (Corynebacterium nigricans)).